The primary structure comprises 366 residues: Neuropeptide Y receptor type 1 (366 aa).

Residues 1 to 39 (MNFSTYFENLSVPNNISGNITFPISEDCALPLPMIFTLA) lie on the Extracellular side of the membrane. Asn2, Asn9, and Asn15 each carry an N-linked (GlcNAc...) asparagine glycan. A helical transmembrane segment spans residues 40-60 (LAYGAVIILGLSGNLALIIII). Residues 61–82 (LKQKEMRNVTNILIVNLSFSDL) are Cytoplasmic-facing. The helical transmembrane segment at 83–103 (LATIMCLPFTLIYTLMDHWIF) threads the bilayer. The Extracellular segment spans residues 104 to 111 (GEVMCKLN). Cys108 and Cys193 are oxidised to a cystine. Residues 112–132 (EYIQCVSVTVSIFSLVLIAIE) form a helical membrane-spanning segment. The Cytoplasmic segment spans residues 133-149 (RHQLIINPRGWRPNNRH). The chain crosses the membrane as a helical span at residues 150–170 (ACFGITVIWGFAMACSTPLMM). The Extracellular segment spans residues 171 to 203 (YSVLTDEPFKNISLDSYIGKYVCLEDFPEDKFR). Residue Asn181 is glycosylated (N-linked (GlcNAc...) asparagine). Residues 204 to 224 (LSYTTLLFILQYLGPLCFIFV) form a helical membrane-spanning segment. Over 225 to 260 (CYTKIFLRLKRRNNMMDKIRDNKYRSSETKRINIML) the chain is Cytoplasmic. Residues 261–281 (LSIVVGFALCWLPFFIFNLVF) form a helical membrane-spanning segment. Topologically, residues 282-294 (DWNHEAVATCNHN) are extracellular. A helical membrane pass occupies residues 295-315 (LLFLICHLTAMISTCVNPIFY). The Cytoplasmic segment spans residues 316–366 (GFLNKNFQRDLQFFFNFCDFRSREDDYETIAMSTMHTDVSKTSLKQASPIA). The S-palmitoyl cysteine moiety is linked to residue Cys333.

This sequence belongs to the G-protein coupled receptor 1 family.

Its subcellular location is the cell membrane. Functionally, receptor for neuropeptide Y and peptide YY. The polypeptide is Neuropeptide Y receptor type 1 (npy1r) (Xenopus laevis (African clawed frog)).